We begin with the raw amino-acid sequence, 221 residues long: uncharacterized protein (221 aa).

Positions Met-1–Gln-30 are cleaved as a signal peptide.

Its subcellular location is the virion. This is an uncharacterized protein from Acanthamoeba polyphaga mimivirus (APMV).